The following is a 92-amino-acid chain: Small ribosomal subunit protein uS19 (92 aa).

This sequence belongs to the universal ribosomal protein uS19 family.

Protein S19 forms a complex with S13 that binds strongly to the 16S ribosomal RNA. This chain is Small ribosomal subunit protein uS19, found in Chromobacterium violaceum (strain ATCC 12472 / DSM 30191 / JCM 1249 / CCUG 213 / NBRC 12614 / NCIMB 9131 / NCTC 9757 / MK).